An 868-amino-acid polypeptide reads, in one-letter code: Translation initiation factor IF-2 (868 aa).

Over residues 199 to 209 the composition is skewed to basic and acidic residues; the sequence is SKKEEVKPEKV. The tract at residues 199 to 269 is disordered; it reads SKKEEVKPEK…GTEKSDKYRE (71 aa). Over residues 249–260 the composition is skewed to basic residues; the sequence is RGGRSKFKKKKG. The region spanning 368-537 is the tr-type G domain; sequence GRAPVVTIMG…LLQSEVLELK (170 aa). The interval 377–384 is G1; sequence GHVDHGKT. 377-384 is a binding site for GTP; it reads GHVDHGKT. Residues 402–406 are G2; sequence GITQH. The tract at residues 423–426 is G3; it reads DTPG. Residues 423-427 and 477-480 each bind GTP; these read DTPGH and NKMD. The G4 stretch occupies residues 477–480; the sequence is NKMD. Positions 513–515 are G5; sequence SAK.

The protein belongs to the TRAFAC class translation factor GTPase superfamily. Classic translation factor GTPase family. IF-2 subfamily.

Its subcellular location is the cytoplasm. Its function is as follows. One of the essential components for the initiation of protein synthesis. Protects formylmethionyl-tRNA from spontaneous hydrolysis and promotes its binding to the 30S ribosomal subunits. Also involved in the hydrolysis of GTP during the formation of the 70S ribosomal complex. This is Translation initiation factor IF-2 from Legionella pneumophila (strain Paris).